The primary structure comprises 435 residues: GTPase Der (435 aa).

EngA-type G domains follow at residues 3-168 (PLVA…PDET) and 176-351 (IKLA…QNRQ). Residues 9 to 16 (GRPNVGKS), 56 to 60 (DTGGY), 120 to 123 (NKVE), 182 to 189 (GRPNVGKS), 229 to 233 (DTAGL), and 294 to 297 (NKWD) contribute to the GTP site. The KH-like domain maps to 352 to 435 (KKISTSELNR…VPVSFRYRKK (84 aa)).

It belongs to the TRAFAC class TrmE-Era-EngA-EngB-Septin-like GTPase superfamily. EngA (Der) GTPase family. As to quaternary structure, associates with the 50S ribosomal subunit.

In terms of biological role, GTPase that plays an essential role in the late steps of ribosome biogenesis. The chain is GTPase Der from Chlorobium phaeobacteroides (strain BS1).